The following is a 42-amino-acid chain: Tachystatin-B2 (42 aa).

Intrachain disulfides connect Cys-4–Cys-20, Cys-11–Cys-25, and Cys-19–Cys-37.

As to expression, granular hemocytes, small secretory granules.

The protein resides in the secreted. Exhibits stronger antimicrobial activity against the Gram-positive bacteria (S.aureus (IC(50) is 7.4 ug/ml)) and fungi (C.albicans (IC(50) is 3.0 ug/ml) and P.pastoris (IC(50) is 0.1 ug/ml)) than Gram-negative bacteria (E.coli no inhibition at 100 ug/ml). Binds to chitin (4.3 uM are required to obtain 50% of binding). Does not cause hemolysis on sheep erythrocytes. Has no blocking activity on the P-type calcium channel. The sequence is that of Tachystatin-B2 from Tachypleus tridentatus (Japanese horseshoe crab).